The following is a 223-amino-acid chain: Kynurenine formamidase (223 aa).

Phenylalanine 34 contributes to the substrate binding site. Residues histidine 64, histidine 68, and aspartate 70 each contribute to the Zn(2+) site. The active-site Proton donor/acceptor is histidine 74. The Zn(2+) site is built by histidine 174 and glutamate 186.

Belongs to the Cyclase 1 superfamily. KynB family. In terms of assembly, homodimer. Zn(2+) serves as cofactor.

It catalyses the reaction N-formyl-L-kynurenine + H2O = L-kynurenine + formate + H(+). It functions in the pathway amino-acid degradation; L-tryptophan degradation via kynurenine pathway; L-kynurenine from L-tryptophan: step 2/2. Catalyzes the hydrolysis of N-formyl-L-kynurenine to L-kynurenine, the second step in the kynurenine pathway of tryptophan degradation. The sequence is that of Kynurenine formamidase from Polaromonas naphthalenivorans (strain CJ2).